A 165-amino-acid polypeptide reads, in one-letter code: UPF0262 protein blr1257 (165 aa).

The protein belongs to the UPF0262 family.

This is UPF0262 protein blr1257 from Bradyrhizobium diazoefficiens (strain JCM 10833 / BCRC 13528 / IAM 13628 / NBRC 14792 / USDA 110).